Reading from the N-terminus, the 321-residue chain is Methyltransferase cfoB (321 aa).

This sequence belongs to the methyltransferase superfamily.

Its pathway is secondary metabolite biosynthesis; flavonoid biosynthesis. Functionally, methyltransferase; part of the gene cluster that mediates the biosynthesis of chlorflavonin, a fungal flavonoid with acetolactate synthase inhibitory activity. Within the pathway, cfoB is responsible for the methylation at position C7-OH of flavonoid. The pathway begins with the PKS-NRPS hybrid synthetase cfoA that uses benzoic acid or p-hydroxybenzoic acid as a starter unit with four rounds of chain elongation using malonyl-CoA to form the chalcone skeleton. Then, a new type of chalcone isomerase, cfoK, catalyzes the conversion of the chalcone into a flavanone by a histidine-mediated oxa-Michael addition mechanism. The desaturation of flavanone to flavone is catalyzed by a new type of flavone synthase, the flavin mononucleotide (FMN)-dependent oxidoreductase cfoJ. Monooxygenases cfoF, cfoG, and P450 cfoH are responsible for the hydroxylation of the flavonoid skeleton at sites C3, C8, and C2', respectively. Like cfoF, the dehydratase cfoI also plays a role in the hydroxylation of position C3. Methyltransferases cfoB, cfoC, and cfoD then catalyze the methylation of C7-OH, C8-OH, and C3-OH, respectively. Finally, the monooxygenase cfoE is responsible for the chlorination of flavonoid at position C3'. This chain is Methyltransferase cfoB, found in Aspergillus candidus.